The primary structure comprises 549 residues: Cation/acetate symporter ActP (549 aa).

Helical transmembrane passes span 33–53 (WQAIIMFLIFVVFTLGITYWA), 77–97 (LAIAGDYMSAASFLGISALVF), 103–123 (GLIYSLGFLVGWPIILFLIAE), 148–168 (ILSACGSLVVVALYLIAQMVG), 183–203 (IAVVLVGVLMMMYVLFGGMLA), 206–226 (WVQIIKAVLLLFGASFMAFMV), 262–282 (ISALSLGLGLMFGTAGLPHIL), 303–323 (GFMGYFYILTFIIGFGAIMLV), 355–375 (LFLGFISAVAFATILAVVAGL), 404–424 (VSKITVLILGVIAIILGVLFE), 428–448 (IAFMVGLAFAIAASCNFPIIL), 464–484 (GGWLGLITAVVLMILGPTIWV), and 493–513 (IFPYEYPALFSISVAFLGIWF).

The protein belongs to the sodium:solute symporter (SSF) (TC 2.A.21) family.

The protein resides in the cell inner membrane. Functionally, transports acetate. The polypeptide is Cation/acetate symporter ActP (Escherichia coli O8 (strain IAI1)).